Here is a 267-residue protein sequence, read N- to C-terminus: Lectin SfL-2 (267 aa).

Repeat copies occupy residues 1 to 67 (GRYT…RRGE), 68 to 135 (SNNY…QAEG), 136 to 202 (DTYN…LTGA), and 203 to 267 (NNYK…GVAN). The tract at residues 1-267 (GRYTVQNQWG…GPIGFKGVAN (267 aa)) is 4 X approximate tandem repeats.

As to quaternary structure, monomer.

Its function is as follows. Lectin specific for high mannose N-glycans, recognizes the branched moiety of these glycans. Does not recognize other types of N-glycans or monosaccharides. The chain is Lectin SfL-2 from Solieria filiformis (Red alga).